The following is a 126-amino-acid chain: Glycine cleavage system H protein (126 aa).

In terms of domain architecture, Lipoyl-binding spans 23 to 104 (TLTVGITDHA…PYESWLFKIK (82 aa)). An N6-lipoyllysine modification is found at K64.

The protein belongs to the GcvH family. As to quaternary structure, the glycine cleavage system is composed of four proteins: P, T, L and H. (R)-lipoate is required as a cofactor.

Its function is as follows. The glycine cleavage system catalyzes the degradation of glycine. The H protein shuttles the methylamine group of glycine from the P protein to the T protein. The protein is Glycine cleavage system H protein of Paraburkholderia phytofirmans (strain DSM 17436 / LMG 22146 / PsJN) (Burkholderia phytofirmans).